A 90-amino-acid polypeptide reads, in one-letter code: U7-theraphotoxin-Hhn1f (90 aa).

The N-terminal stretch at 1–19 is a signal peptide; that stretch reads MKTAIFTVVLALAVFAVLS. Residues 20–50 constitute a propeptide that is removed on maturation; sequence FGWEANEKALSEEFTELIHEKEAASETEARG. 3 disulfides stabilise this stretch: Cys-51–Cys-65, Cys-58–Cys-70, and Cys-64–Cys-81.

Belongs to the neurotoxin 10 (Hwtx-1) family. 13 (Hntx-13) subfamily. Expressed by the venom gland.

It is found in the secreted. Functionally, ion channel inhibitor. This Cyriopagopus hainanus (Chinese bird spider) protein is U7-theraphotoxin-Hhn1f.